The chain runs to 713 residues: Forkhead box protein P2 (713 aa).

The span at M1–D28 shows a compositional bias: polar residues. Disordered stretches follow at residues M1–V44 and K283–S337. A compositionally biased stretch (low complexity) spans T290–S303. Over residues S313–L322 the composition is skewed to polar residues. Over residues A324–G335 the composition is skewed to basic and acidic residues. The C2H2-type zinc finger occupies G344–H369. Positions V386–L407 are leucine-zipper. The CTBP1-binding stretch occupies residues P420 to V424. The segment covering T436–Q457 has biased composition (low complexity). The tract at residues T436–T463 is disordered. Residues R502–L592 constitute a DNA-binding region (fork-head). 2 disordered regions span residues L647–I666 and V676–E713. The span at L697 to E713 shows a compositional bias: acidic residues.

Forms homodimers and heterodimers with FOXP1 and FOXP4. Dimerization is required for DNA-binding. Interacts with CTBP1. Interacts with FOXP1. Interacts with TBR1. Interacts with ZMYM2.

The protein localises to the nucleus. Transcriptional repressor that may play a role in the specification and differentiation of lung epithelium. May also play a role in developing neural, gastrointestinal and cardiovascular tissues. Can act with CTBP1 to synergistically repress transcription but CTPBP1 is not essential. Plays a role in synapse formation by regulating SRPX2 levels. The chain is Forkhead box protein P2 (FOXP2) from Gorilla gorilla gorilla (Western lowland gorilla).